A 468-amino-acid chain; its full sequence is Acetyl-CoA decarbonylase/synthase complex subunit gamma 1 (468 aa).

In terms of domain architecture, 4Fe-4S spans 1–61 (MKINSPLEAY…YAKKLAELDR (61 aa)). The [4Fe-4S] cluster site is built by C18, C21, C26, and C43.

In terms of assembly, heterodimer of delta and gamma chains. The ACDS complex is made up of alpha, epsilon, beta, gamma and delta chains with a probable stoichiometry of (alpha(2)epsilon(2))(4)-beta(8)-(gamma(1)delta(1))(8). Requires corrinoid as cofactor. It depends on [4Fe-4S] cluster as a cofactor.

The catalysed reaction is 5,6,7,8-tetrahydrosarcinapterin + methyl-Co(III)-[corrinoid Fe-S protein] = 5-methyltetrahydrosarcinapterin + Co(I)-[corrinoid Fe-S protein] + H(+). It participates in one-carbon metabolism; methanogenesis from acetate. Part of a complex that catalyzes the reversible cleavage of acetyl-CoA, allowing growth on acetate as sole source of carbon and energy. This is Acetyl-CoA decarbonylase/synthase complex subunit gamma 1 from Methanosarcina thermophila.